Here is a 382-residue protein sequence, read N- to C-terminus: Dual-specificity RNA methyltransferase RlmN (382 aa).

Glu96 serves as the catalytic Proton acceptor. The Radical SAM core domain maps to 102–342 (QGKRGTLCVS…VRTTRGEDID (241 aa)). Cys109 and Cys345 are joined by a disulfide. [4Fe-4S] cluster-binding residues include Cys116, Cys120, and Cys123. Residues 170–171 (GE), Ser202, 224–226 (SLH), and Asn302 each bind S-adenosyl-L-methionine. The S-methylcysteine intermediate role is filled by Cys345.

This sequence belongs to the radical SAM superfamily. RlmN family. It depends on [4Fe-4S] cluster as a cofactor.

It localises to the cytoplasm. It carries out the reaction adenosine(2503) in 23S rRNA + 2 reduced [2Fe-2S]-[ferredoxin] + 2 S-adenosyl-L-methionine = 2-methyladenosine(2503) in 23S rRNA + 5'-deoxyadenosine + L-methionine + 2 oxidized [2Fe-2S]-[ferredoxin] + S-adenosyl-L-homocysteine. It catalyses the reaction adenosine(37) in tRNA + 2 reduced [2Fe-2S]-[ferredoxin] + 2 S-adenosyl-L-methionine = 2-methyladenosine(37) in tRNA + 5'-deoxyadenosine + L-methionine + 2 oxidized [2Fe-2S]-[ferredoxin] + S-adenosyl-L-homocysteine. Its function is as follows. Specifically methylates position 2 of adenine 2503 in 23S rRNA and position 2 of adenine 37 in tRNAs. m2A2503 modification seems to play a crucial role in the proofreading step occurring at the peptidyl transferase center and thus would serve to optimize ribosomal fidelity. This is Dual-specificity RNA methyltransferase RlmN from Pseudomonas syringae pv. syringae (strain B728a).